Consider the following 120-residue polypeptide: NAD(P)H-quinone oxidoreductase subunit 3, chloroplastic (120 aa).

A run of 3 helical transmembrane segments spans residues 9 to 29, 64 to 84, and 88 to 108; these read IFWA…FISG, MFAL…PWAM, and VLGV…IVGL.

This sequence belongs to the complex I subunit 3 family. As to quaternary structure, NDH is composed of at least 16 different subunits, 5 of which are encoded in the nucleus.

The protein resides in the plastid. Its subcellular location is the chloroplast thylakoid membrane. It carries out the reaction a plastoquinone + NADH + (n+1) H(+)(in) = a plastoquinol + NAD(+) + n H(+)(out). The catalysed reaction is a plastoquinone + NADPH + (n+1) H(+)(in) = a plastoquinol + NADP(+) + n H(+)(out). Functionally, NDH shuttles electrons from NAD(P)H:plastoquinone, via FMN and iron-sulfur (Fe-S) centers, to quinones in the photosynthetic chain and possibly in a chloroplast respiratory chain. The immediate electron acceptor for the enzyme in this species is believed to be plastoquinone. Couples the redox reaction to proton translocation, and thus conserves the redox energy in a proton gradient. This Lactuca sativa (Garden lettuce) protein is NAD(P)H-quinone oxidoreductase subunit 3, chloroplastic.